The chain runs to 250 residues: Isoprenyl transferase (250 aa).

The active site involves D27. A Mg(2+)-binding site is contributed by D27. Substrate-binding positions include 28 to 31 (GNRR), W32, H48, and 76 to 78 (STE). N79 acts as the Proton acceptor in catalysis. Substrate is bound by residues F80, R82, R199, and 205–207 (RVS). Residue E218 participates in Mg(2+) binding.

The protein belongs to the UPP synthase family. Homodimer. Requires Mg(2+) as cofactor.

Its function is as follows. Catalyzes the condensation of isopentenyl diphosphate (IPP) with allylic pyrophosphates generating different type of terpenoids. The polypeptide is Isoprenyl transferase (Chlamydia pneumoniae (Chlamydophila pneumoniae)).